The primary structure comprises 1497 residues: ABC multidrug transporter C (1497 aa).

Polar residues predominate over residues Met1–Pro13. The disordered stretch occupies residues Met1–Gly21. Asn137 and Asn336 each carry an N-linked (GlcNAc...) asparagine glycan. In terms of domain architecture, ABC transporter 1 spans Leu158–Glu412. The next 5 membrane-spanning stretches (helical) occupy residues Leu523 to Tyr543, Ala557 to Leu577, Ala599 to Leu621, Gly632 to Phe652, and Ala665 to Pro685. N-linked (GlcNAc...) asparagine glycosylation is present at Asn762. A helical membrane pass occupies residues Gly777 to Ile797. The interval Gln815–Thr843 is disordered. In terms of domain architecture, ABC transporter 2 spans Phe853 to Ala1096. Gly889–Thr896 is an ATP binding site. 5 helical membrane passes run Tyr1192 to Phe1212, Phe1226 to Phe1246, Ile1273 to Tyr1293, Leu1313 to Ile1333, and Leu1352 to Phe1372. A glycan (N-linked (GlcNAc...) asparagine) is linked at Asn1411. The helical transmembrane segment at Phe1464–Leu1484 threads the bilayer.

Belongs to the ABC transporter superfamily. ABCG family. PDR (TC 3.A.1.205) subfamily.

It localises to the cell membrane. The catalysed reaction is fluconazole(in) + ATP + H2O = fluconazole(out) + ADP + phosphate + H(+). The enzyme catalyses itraconazole(in) + ATP + H2O = itraconazole(out) + ADP + phosphate + H(+). It catalyses the reaction voriconazole(in) + ATP + H2O = voriconazole(out) + ADP + phosphate + H(+). The efflux inhibitor FK506 impairs the transport activity. Functionally, pleiotropic ABC efflux transporter that shows a strong substrate specificity for the azole class of drugs such as lotrimazole (CLT), fluconazole (FLC), itraconazole (ITC), ketoconazole (KTC), posaconazole (POS), tebuconazole (TEBZ), and voriconazole (VRC). Is also able to transport rhodamine 6G (R-6G), a known substrate for many ABC transporters. Required for normal pathogenesis in a Galleria mellonella (greater wax moth) infection model. The polypeptide is ABC multidrug transporter C (Aspergillus fumigatus (strain ATCC MYA-4609 / CBS 101355 / FGSC A1100 / Af293) (Neosartorya fumigata)).